The chain runs to 217 residues: Thymidylate kinase (217 aa).

An ATP-binding site is contributed by 7 to 14 (GIDGAGKS).

It belongs to the thymidylate kinase family.

It carries out the reaction dTMP + ATP = dTDP + ADP. Phosphorylation of dTMP to form dTDP in both de novo and salvage pathways of dTTP synthesis. The sequence is that of Thymidylate kinase from Chlorobaculum parvum (strain DSM 263 / NCIMB 8327) (Chlorobium vibrioforme subsp. thiosulfatophilum).